A 1461-amino-acid chain; its full sequence is Calmodulin-regulated spectrin-associated protein 2 (1461 aa).

Positions 211–324 constitute a Calponin-homology (CH) domain; it reads PGGQKARYRK…FMAELFWWFE (114 aa). Residues 361–389 are disordered; that stretch reads RDSSSSSDFSSRYTRPQTHSSASGGIRRS. Low complexity-rich tracts occupy residues 362 to 371 and 380 to 389; these read DSSSSSDFSS and SSASGGIRRS. Ser-391 and Ser-393 each carry phosphoserine. A Phosphothreonine modification is found at Thr-401. Residues Ser-439, Ser-572, Ser-573, Ser-585, and Ser-647 each carry the phosphoserine modification. 2 disordered regions span residues 573–613 and 639–704; these read SPDN…EDSS and ASNP…GSEL. Residue Thr-652 is modified to Phosphothreonine. Residue Ser-654 is modified to Phosphoserine. A compositionally biased stretch (low complexity) spans 654 to 673; it reads STKSQPGSSASSSSGVKMTS. Positions 677 to 687 are enriched in basic and acidic residues; that stretch reads QKFRKLNHTDG. A coiled-coil region spans residues 730–767; the sequence is LLASEMVHLRMRLEEKRRAIEAQKKKMEAAFTKQRQKM. Residues 787 to 826 are compositionally biased toward basic and acidic residues; that stretch reads REEAAGAEDEKVYTDRAKERESQKMDGQRSKSLADIKESM. The interval 787-855 is disordered; it reads REEAAGAEDE…QWNLTSPSEE (69 aa). At Ser-836 the chain carries Phosphoserine. Residues 861 to 900 are a coiled coil; the sequence is EILEYTKSIEKLNSSLHFLQQEMQRLSLQQEMLMQMREQQ. Positions 896 to 1007 are MBD region; that stretch reads MREQQAWVIS…IQTRSFVCFG (112 aa). A phosphoserine mark is found at Ser-905 and Ser-910. 5 disordered regions span residues 921 to 992, 1004 to 1044, 1069 to 1090, 1102 to 1124, and 1163 to 1321; these read RQAG…RRFS, VCFG…GEKE, NEDQ…PTAP, DLKP…DKEQ, and KETQ…EYTG. Residues 926 to 937 show a composition bias toward low complexity; that stretch reads SSAAAPFSSDSP. Residues 943–962 show a composition bias toward polar residues; sequence SPQSSTRKSASFSVKNQRTP. Phosphothreonine is present on residues Thr-970, Thr-975, and Thr-977. Phosphoserine occurs at positions 981 and 992. The segment covering 1011 to 1028 has biased composition (basic and acidic residues); the sequence is EPQKEPKQKEEIKKEPSE. Residues 1077–1089 show a composition bias toward pro residues; sequence TEPPPKPVFPPTA. Composition is skewed to basic and acidic residues over residues 1104 to 1124 and 1163 to 1224; these read KPPE…DKEQ and KETQ…DTVI. Ser-1120 carries the post-translational modification Phosphoserine. Residues 1138–1210 are a coiled coil; that stretch reads KDDQKAENDM…REFIRQEYMR (73 aa). Residues 1259-1271 are compositionally biased toward polar residues; that stretch reads SSLSLASLNTGDS. Phosphoserine occurs at positions 1285, 1291, and 1293. The segment covering 1306 to 1318 has biased composition (polar residues); it reads NASTTSSVASGTE. The CKK domain maps to 1321–1455; the sequence is GPKLYKEPSA…QTKRPVTPKK (135 aa).

The protein belongs to the CAMSAP1 family. Interacts with CAMSAP3. Interacts with KATNA1 and KATNB1; leading to regulate the length of CAMSAP2-decorated microtubule stretches. Interacts with a complex formed by AKAP9 and PDE4DIP isoform 2/MMG8/SMYLE, which recruits CAMSAP2 to the Golgi. Interacts with MAPRE1/EB1.

Its subcellular location is the cytoplasm. It localises to the cytoskeleton. It is found in the golgi apparatus. The protein localises to the cilium basal body. Key microtubule-organizing protein that specifically binds the minus-end of non-centrosomal microtubules and regulates their dynamics and organization. Specifically recognizes growing microtubule minus-ends and autonomously decorates and stabilizes microtubule lattice formed by microtubule minus-end polymerization. Acts on free microtubule minus-ends that are not capped by microtubule-nucleating proteins or other factors and protects microtubule minus-ends from depolymerization. In addition, it also reduces the velocity of microtubule polymerization. Through the microtubule cytoskeleton, also regulates the organization of cellular organelles including the Golgi and the early endosomes. Essential for the tethering, but not for nucleation of non-centrosomal microtubules at the Golgi: together with Golgi-associated proteins AKAP9 and PDE4DIP, required to tether non-centrosomal minus-end microtubules to the Golgi, an important step for polarized cell movement. Also acts as a regulator of neuronal polarity and development: localizes to non-centrosomal microtubule minus-ends in neurons and stabilizes non-centrosomal microtubules, which is required for neuronal polarity, axon specification and dendritic branch formation. Through the microtubule cytoskeleton, regulates the autophagosome transport. The chain is Calmodulin-regulated spectrin-associated protein 2 from Mus musculus (Mouse).